The primary structure comprises 163 residues: Nucleotide-binding protein Spro_1084 (163 aa).

The protein belongs to the YajQ family.

Nucleotide-binding protein. The chain is Nucleotide-binding protein Spro_1084 from Serratia proteamaculans (strain 568).